The primary structure comprises 347 residues: Palmitoyltransferase ZDHHC11 (347 aa).

The Cytoplasmic segment spans residues 1–46; it reads MKEMNICGINKNWVLPEAQENNVKKFLPRPLSRVNGWSPPLHSFQA. A helical transmembrane segment spans residues 47–67; it reads ISWITYLAMSIVTFGIFIPFL. At 68 to 75 the chain is on the lumenal side; that stretch reads PYSWKYAA. The chain crosses the membrane as a helical span at residues 76–96; the sequence is NIVMGGVFIFHLIVHLIAITI. Over 97 to 170 the chain is Cytoplasmic; that stretch reads DPADTNVRLK…LNNCVGRRNY (74 aa). The DHHC domain maps to 128–178; the sequence is QYCHLCEVTASKKAKHCSACNKCVSGFDHHCKWLNNCVGRRNYWFFFWSVA. Cys-158 acts as the S-palmitoyl cysteine intermediate in catalysis. Residues 171 to 191 form a helical membrane-spanning segment; sequence WFFFWSVASAAVGILGVMIIL. At 192–234 the chain is on the lumenal side; it reads CYICIQYFVNPDELRTDPLYKEIISENTWLLFLSLWPVPVKTP. Residues 235–255 traverse the membrane as a helical segment; sequence IVLSIAVMALLLAIASFVMLG. Residues 256–347 are Cytoplasmic-facing; that stretch reads HLLIFHLYLI…SPPKICHSED (92 aa). Residues 291–306 are compositionally biased toward basic and acidic residues; the sequence is ELPLQKKGDLPQEKSD. Positions 291–332 are disordered; that stretch reads ELPLQKKGDLPQEKSDNWAWPKSPPRVGSQKFPVSTLSPKSS. Polar residues predominate over residues 322–331; the sequence is FPVSTLSPKS.

The protein belongs to the DHHC palmitoyltransferase family. In terms of assembly, interacts with IRF3 and STING1; in presence of DNA viruses recruits IRF3 to STING1 promoting IRF3 phosphorylation and activation.

It is found in the endosome membrane. The catalysed reaction is L-cysteinyl-[protein] + hexadecanoyl-CoA = S-hexadecanoyl-L-cysteinyl-[protein] + CoA. Its function is as follows. Endoplasmic reticulum-localized palmitoyltransferase that could catalyze the addition of palmitate onto various protein substrates and be involved in a variety of cellular processes. Has a palmitoyltransferase activity toward NCDN and regulates NCDN association with endosome membranes through this palmitoylation. May play a role in cell proliferation. Also has a palmitoyltransferase activity-independent function in DNA virus-triggered and CGAS-mediated innate immune response. Functions as an adapter that recruits IRF3 to STING1 to promote the activation of that key transcriptional regulator of type I interferon (IFN)-dependent immune response. This Mus musculus (Mouse) protein is Palmitoyltransferase ZDHHC11.